The primary structure comprises 520 residues: Probable glycerol-3-phosphate acyltransferase 3 (520 aa).

Transmembrane regions (helical) follow at residues 5–20 (ISIFQALVFLFYRFIL), 64–84 (YFMLVAFEAGGVIRSFLLFIL), 88–108 (ISLMSHEMGVKVMVMVSFFGI), 264–284 (TLMNTLVLFMWGPFAAAAAAA), and 286–306 (LFVSLCIPYSLSIPILAFSGC). The HXXXXD motif motif lies at 334-339 (HRTLLD).

It belongs to the GPAT/DAPAT family. In terms of tissue distribution, widely expressed at low level. Expressed at higher level in seedlings and leaves.

The protein resides in the membrane. It carries out the reaction sn-glycerol 3-phosphate + an acyl-CoA = a 1-acyl-sn-glycero-3-phosphate + CoA. The protein operates within phospholipid metabolism; CDP-diacylglycerol biosynthesis; CDP-diacylglycerol from sn-glycerol 3-phosphate: step 1/3. Its function is as follows. Esterifies acyl-group from acyl-ACP to the sn-1 position of glycerol-3-phosphate, an essential step in glycerolipid biosynthesis. The polypeptide is Probable glycerol-3-phosphate acyltransferase 3 (GPAT3) (Arabidopsis thaliana (Mouse-ear cress)).